A 278-amino-acid polypeptide reads, in one-letter code: Probable endonuclease 4 (278 aa).

Zn(2+)-binding residues include His66, His106, Glu142, Asp176, His179, His213, Asp226, His228, and Glu258.

Belongs to the AP endonuclease 2 family. Zn(2+) is required as a cofactor.

The catalysed reaction is Endonucleolytic cleavage to 5'-phosphooligonucleotide end-products.. Endonuclease IV plays a role in DNA repair. It cleaves phosphodiester bonds at apurinic or apyrimidinic (AP) sites, generating a 3'-hydroxyl group and a 5'-terminal sugar phosphate. The polypeptide is Probable endonuclease 4 (Halothermothrix orenii (strain H 168 / OCM 544 / DSM 9562)).